The chain runs to 232 residues: Noggin (232 aa).

The N-terminal stretch at Met-1–Gly-27 is a signal peptide. Residue Asn-62 is glycosylated (N-linked (GlcNAc...) asparagine). Residues Gly-77 to Gly-96 form a disordered region. 4 disulfide bridges follow: Cys-155–Cys-192, Cys-178–Cys-228, Cys-184–Cys-230, and Cys-207–Cys-215.

It belongs to the noggin family. In terms of assembly, homodimer. Interacts with GDF5; inhibits chondrocyte differentiation.

It localises to the secreted. Functionally, inhibitor of bone morphogenetic proteins (BMP) signaling which is required for growth and patterning of the neural tube and somite. Essential for cartilage morphogenesis and joint formation. Inhibits chondrocyte differentiation through its interaction with GDF5 and, probably, GDF6. The polypeptide is Noggin (NOG) (Homo sapiens (Human)).